Reading from the N-terminus, the 133-residue chain is Glycine cleavage system H protein (133 aa).

The Lipoyl-binding domain maps to 30–112 (TITVGITHHA…YGAGWFFKIK (83 aa)). Lys71 carries the post-translational modification N6-lipoyllysine.

Belongs to the GcvH family. In terms of assembly, the glycine cleavage system is composed of four proteins: P, T, L and H. (R)-lipoate is required as a cofactor.

In terms of biological role, the glycine cleavage system catalyzes the degradation of glycine. The H protein shuttles the methylamine group of glycine from the P protein to the T protein. The protein is Glycine cleavage system H protein of Neisseria gonorrhoeae (strain ATCC 700825 / FA 1090).